The following is a 418-amino-acid chain: tRNA-2-methylthio-N(6)-dimethylallyladenosine synthase (418 aa).

The 117-residue stretch at 2–118 (PGYYLWTIGC…WREIPEGFIL (117 aa)) folds into the MTTase N-terminal domain. C11, C47, C81, C134, C138, and C141 together coordinate [4Fe-4S] cluster. The region spanning 120–351 (LRPPVSANVT…EDLQKETVGK (232 aa)) is the Radical SAM core domain. The 69-residue stretch at 346–414 (KETVGKANAA…PWSLQAKLVN (69 aa)) folds into the TRAM domain.

The protein belongs to the methylthiotransferase family. MiaB subfamily. In terms of assembly, monomer. It depends on [4Fe-4S] cluster as a cofactor.

It localises to the cytoplasm. It catalyses the reaction N(6)-dimethylallyladenosine(37) in tRNA + (sulfur carrier)-SH + AH2 + 2 S-adenosyl-L-methionine = 2-methylsulfanyl-N(6)-dimethylallyladenosine(37) in tRNA + (sulfur carrier)-H + 5'-deoxyadenosine + L-methionine + A + S-adenosyl-L-homocysteine + 2 H(+). In terms of biological role, catalyzes the methylthiolation of N6-(dimethylallyl)adenosine (i(6)A), leading to the formation of 2-methylthio-N6-(dimethylallyl)adenosine (ms(2)i(6)A) at position 37 in tRNAs that read codons beginning with uridine. This is tRNA-2-methylthio-N(6)-dimethylallyladenosine synthase from Dehalococcoides mccartyi (strain CBDB1).